The sequence spans 402 residues: LIM/homeobox protein Lhx5 (402 aa).

LIM zinc-binding domains follow at residues 3–61 and 62–125; these read VHCA…RRFG and TKCA…SSSL. Positions 124 to 148 are enriched in low complexity; sequence SLKEGSLNSVSSCTDRSLSPDLQDP. Disordered regions lie at residues 124 to 186 and 298 to 402; these read SLKE…PRTT and HGPP…AAVW. Basic and acidic residues predominate over residues 151-167; sequence DDPKETDNSTSSDKETA. A DNA-binding region (homeobox) is located at residues 180–239; the sequence is RRGPRTTIKAKQLETLKAAFAATPKPTRHIREQLAQETGLNMRVIQVWFQNRRSKERRMK. Low complexity-rich tracts occupy residues 300–311 and 322–336; these read PPSQAQSPADSS and PLGA…PHGA.

The protein localises to the nucleus. Functionally, plays an essential role in the regulation of neuronal differentiation and migration during development of the central nervous system. The protein is LIM/homeobox protein Lhx5 (Lhx5) of Mus musculus (Mouse).